A 133-amino-acid polypeptide reads, in one-letter code: Holo-[acyl-carrier-protein] synthase (133 aa).

The Mg(2+) site is built by aspartate 8 and glutamate 56.

This sequence belongs to the P-Pant transferase superfamily. AcpS family. The cofactor is Mg(2+).

It is found in the cytoplasm. The catalysed reaction is apo-[ACP] + CoA = holo-[ACP] + adenosine 3',5'-bisphosphate + H(+). In terms of biological role, transfers the 4'-phosphopantetheine moiety from coenzyme A to a Ser of acyl-carrier-protein. The sequence is that of Holo-[acyl-carrier-protein] synthase from Clostridium perfringens (strain ATCC 13124 / DSM 756 / JCM 1290 / NCIMB 6125 / NCTC 8237 / Type A).